We begin with the raw amino-acid sequence, 122 residues long: Large ribosomal subunit protein bL12 (122 aa).

Belongs to the bacterial ribosomal protein bL12 family. As to quaternary structure, homodimer. Part of the ribosomal stalk of the 50S ribosomal subunit. Forms a multimeric L10(L12)X complex, where L10 forms an elongated spine to which 2 to 4 L12 dimers bind in a sequential fashion. Binds GTP-bound translation factors.

Forms part of the ribosomal stalk which helps the ribosome interact with GTP-bound translation factors. Is thus essential for accurate translation. In Azotobacter vinelandii (strain DJ / ATCC BAA-1303), this protein is Large ribosomal subunit protein bL12.